The following is a 425-amino-acid chain: Trigger factor (425 aa).

Residues 163-248 (GDTAVIDFEG…IHEIKTKELP (86 aa)) form the PPIase FKBP-type domain.

The protein belongs to the FKBP-type PPIase family. Tig subfamily.

Its subcellular location is the cytoplasm. It catalyses the reaction [protein]-peptidylproline (omega=180) = [protein]-peptidylproline (omega=0). Functionally, involved in protein export. Acts as a chaperone by maintaining the newly synthesized protein in an open conformation. Functions as a peptidyl-prolyl cis-trans isomerase. The protein is Trigger factor of Bacillus cereus (strain G9842).